The sequence spans 267 residues: 4-hydroxy-tetrahydrodipicolinate reductase (267 aa).

10–15 contacts NAD(+); it reads GCLGKQ. An NADP(+)-binding site is contributed by Arg-37. Residues 99–101 and 122–125 each bind NAD(+); these read GTT and TTNV. Catalysis depends on His-154, which acts as the Proton donor/acceptor. His-155 contacts (S)-2,3,4,5-tetrahydrodipicolinate. Lys-158 serves as the catalytic Proton donor. Residue 164–165 coordinates (S)-2,3,4,5-tetrahydrodipicolinate; it reads GT.

It belongs to the DapB family.

The protein resides in the cytoplasm. It carries out the reaction (S)-2,3,4,5-tetrahydrodipicolinate + NAD(+) + H2O = (2S,4S)-4-hydroxy-2,3,4,5-tetrahydrodipicolinate + NADH + H(+). The enzyme catalyses (S)-2,3,4,5-tetrahydrodipicolinate + NADP(+) + H2O = (2S,4S)-4-hydroxy-2,3,4,5-tetrahydrodipicolinate + NADPH + H(+). The protein operates within amino-acid biosynthesis; L-lysine biosynthesis via DAP pathway; (S)-tetrahydrodipicolinate from L-aspartate: step 4/4. Catalyzes the conversion of 4-hydroxy-tetrahydrodipicolinate (HTPA) to tetrahydrodipicolinate. The polypeptide is 4-hydroxy-tetrahydrodipicolinate reductase (Ehrlichia canis (strain Jake)).